Reading from the N-terminus, the 188-residue chain is Peptidyl-tRNA hydrolase (188 aa).

Tyr14 contributes to the tRNA binding site. The Proton acceptor role is filled by His19. Residues Tyr64, Asn66, and Asn113 each contribute to the tRNA site.

Belongs to the PTH family. In terms of assembly, monomer.

It is found in the cytoplasm. It catalyses the reaction an N-acyl-L-alpha-aminoacyl-tRNA + H2O = an N-acyl-L-amino acid + a tRNA + H(+). Hydrolyzes ribosome-free peptidyl-tRNAs (with 1 or more amino acids incorporated), which drop off the ribosome during protein synthesis, or as a result of ribosome stalling. Functionally, catalyzes the release of premature peptidyl moieties from peptidyl-tRNA molecules trapped in stalled 50S ribosomal subunits, and thus maintains levels of free tRNAs and 50S ribosomes. The polypeptide is Peptidyl-tRNA hydrolase (Chloroflexus aurantiacus (strain ATCC 29364 / DSM 637 / Y-400-fl)).